A 372-amino-acid polypeptide reads, in one-letter code: 18-hydroxynorfluorocurarine reductase (372 aa).

9 residues coordinate Zn(2+): C47, D50, H69, E70, C100, C103, C106, C114, and C172. NADP(+) contacts are provided by residues 197 to 202 (GLGGIG), K226, 283 to 285 (LGA), S307, and R354.

This sequence belongs to the zinc-containing alcohol dehydrogenase family. In terms of assembly, homodimer. The cofactor is Zn(2+). As to expression, mainly expressed in roots.

It catalyses the reaction (19E)-cur-19-en-17-al + NADP(+) = norfluorocurarine + NADPH + H(+). The enzyme catalyses 17,18-epoxy-17-hydroxycur-19-ene + NADP(+) = 18-hydroxynorfluorocurarine + NADPH + H(+). The protein operates within alkaloid biosynthesis. Its function is as follows. Alcohol dehydrogenase involved in the biosynthesis of curare monoterpene indole alkaloids (MIAs), natural products such as strychnine, a neurotoxic compound used as a pesticide to control rodents, and its pharmacologically active derivatives, including brucine, used to regulate blood pressure. Curare alkaloids act as animal glycine receptor antagonists. Catalyzes the conversion of norfluorocurarine to desoxy Wieland-Gumlich aldehyde, and of 18-OH norfluorocurarine to Wieland-Gumlich aldehyde. This is 18-hydroxynorfluorocurarine reductase from Strychnos nux-vomica (Poison nut).